A 179-amino-acid chain; its full sequence is Large ribosomal subunit protein uL6 (179 aa).

This sequence belongs to the universal ribosomal protein uL6 family. Part of the 50S ribosomal subunit.

Its function is as follows. This protein binds to the 23S rRNA, and is important in its secondary structure. It is located near the subunit interface in the base of the L7/L12 stalk, and near the tRNA binding site of the peptidyltransferase center. The chain is Large ribosomal subunit protein uL6 from Chlorobium phaeobacteroides (strain DSM 266 / SMG 266 / 2430).